The following is a 233-amino-acid chain: Glutathione S-transferase 2 (233 aa).

The GST N-terminal domain maps to glutamine 17–threonine 101. Residues tyrosine 29, histidine 58, valine 72, glutamate 85–cysteine 86, and histidine 133 each bind glutathione. The GST C-terminal domain occupies threonine 106–serine 233.

It belongs to the GST superfamily. As to quaternary structure, homodimer.

The enzyme catalyses RX + glutathione = an S-substituted glutathione + a halide anion + H(+). This chain is Glutathione S-transferase 2 (GTT2), found in Saccharomyces cerevisiae (strain ATCC 204508 / S288c) (Baker's yeast).